The primary structure comprises 551 residues: TRAF3-interacting JNK-activating modulator (551 aa).

Residues 1 to 526 (MISPDPRPSP…QLPPRRQCGR (526 aa)) lie on the Cytoplasmic side of the membrane. Disordered regions lie at residues 73-95 (LEEK…RPGQ) and 140-178 (DHLS…IKND). 2 coiled-coil regions span residues 240–436 (DKLK…LLTK) and 464–506 (WDLR…RKLQ). The chain crosses the membrane as a helical; Anchor for type IV membrane protein span at residues 527–544 (WLPVLMVVIAAALAVFLA). Over 545-551 (NKDNLMI) the chain is Extracellular.

Interacts (via its coiled-coil domain) with TRAF3 (via isoleucine zipper). Interacts with MAP2K1. Interacts with PPP2CA; this interaction targets PPP2CA to the lysosomes. Interacts with TLR4. Interacts with MAVS. Interacts with TBK1.

Its subcellular location is the cell membrane. The protein resides in the golgi apparatus membrane. The protein localises to the lysosome membrane. It is found in the mitochondrion outer membrane. Its function is as follows. Adapter protein that plays essential roles in both innate and adaptive immunity. Plays a crucial role in the regulation of thymocyte development. Mechanistically, mediates TCR-stimulated activation through recruiting MAP2K1/MEK1 to the Golgi and, thereby, facilitating the interaction of MAP2K1/MEK1 with its activator BRAF. Also plays an essential role in regulatory T-cell stability and function by recruiting the serine-threonine phosphatase catalytic subunit (PPP2CA) to the lysosome, thereby facilitating the interaction of PP2Ac with the mTORC1 component RPTOR and restricting glycolytic metabolism. Positively regulates TLR4 signaling activity in macrophage-mediated inflammation by acting as a molecular clamp to facilitate LPS-induced translocation of TLR4 to lipid rafts. In response to viral infection, facilitates the recruitment of TRAF3 to MAVS within mitochondria leading to IRF3 activation and interferon production. However, participates in the maintenance of immune homeostasis and the prevention of overzealous innate immunity by promoting 'Lys-48'-dependent ubiquitination of TBK1. This is TRAF3-interacting JNK-activating modulator (TRAF3IP3) from Homo sapiens (Human).